The sequence spans 140 residues: Putative pre-16S rRNA nuclease (140 aa).

The protein belongs to the YqgF nuclease family.

It localises to the cytoplasm. Functionally, could be a nuclease involved in processing of the 5'-end of pre-16S rRNA. The protein is Putative pre-16S rRNA nuclease of Vibrio vulnificus (strain CMCP6).